The primary structure comprises 1388 residues: DNA-directed RNA polymerase subunit beta (1388 aa).

It belongs to the RNA polymerase beta chain family. As to quaternary structure, the RNAP catalytic core consists of 2 alpha, 1 beta, 1 beta' and 1 omega subunit. When a sigma factor is associated with the core the holoenzyme is formed, which can initiate transcription.

It catalyses the reaction RNA(n) + a ribonucleoside 5'-triphosphate = RNA(n+1) + diphosphate. In terms of biological role, DNA-dependent RNA polymerase catalyzes the transcription of DNA into RNA using the four ribonucleoside triphosphates as substrates. In Xylella fastidiosa (strain Temecula1 / ATCC 700964), this protein is DNA-directed RNA polymerase subunit beta.